Here is a 482-residue protein sequence, read N- to C-terminus: MAAELYPASINTNLPNSNSTAVTAASKKTIVQVTQTVTTPTTTATQQNINNNNVETASWQSTHPTLRERNALMFNNELMADVHFVVGPPGASQKVPAHKYVLAVGSSVFGAMFYGDLAEGESEIHIPDVEPAAFLILLKYMYSDEIELEADTVLATLYAAKKYIVPALAKACVTFLETSLEAKNACVLLSQSRLFEEPELTLRCWEVIDAQAELALHSEGFCEIDLQTLEIILKRETLNTREAVVFQAALDWAVAECKRQGLGPTARNKRAVLGKALYLVRIPTMTLEEFANGAAQSDVLTLEETHDVFLWYTAANKPKLEFPLQKRKGLTPQRCHRFQSSAYRSNQWRYRGRCDSIQFAVDKRIFIAGLGLYGSSGGKAEYSVKIELKRQGVTLAQNLTKFISDGSSNTFSVWFEHPVQVEQDTFYTVSAVLDGNELSYFGQEGMTEVQCGKVTFQFQCSSDSTNGTGVQGGQIPELVFYA.

The BTB domain occupies 80–150 (ADVHFVVGPP…MYSDEIELEA (71 aa)).

In terms of assembly, interacts with cul3. Interacts (via BTB domain) with zbtb16/plzf. As to expression, in embryos, expressed in the cranial ganglia.

The protein localises to the cytoplasm. It is found in the nucleus. Adapter protein for the cul3 E3 ubiquitin-protein ligase complex. Promotes the export of zbtb16/plzf from the nucleus to the cytoplasm and targets zbtb16/plzf for ubiquitination and degradation. Up-regulates neurog1 expression and antagonizes zbtb16/plzf, to promote neurogenesis. In Danio rerio (Zebrafish), this protein is BTB/POZ domain-containing protein 6-B (btbd6b).